Reading from the N-terminus, the 175-residue chain is R-phycoerythrin subunit beta (175 aa).

Residue Cys82 participates in (2R,3E)-phycoerythrobilin binding.

Belongs to the phycobiliprotein family. Homodimer. Post-translationally, contains one covalently linked phycoerythrobilin chromophore.

Its function is as follows. Green-light absorbing phycoerythrin of unknown function. This chain is R-phycoerythrin subunit beta (cpeB), found in Prochlorococcus marinus subsp. pastoris (strain CCMP1986 / NIES-2087 / MED4).